A 104-amino-acid polypeptide reads, in one-letter code: SOSS complex subunit C (104 aa).

A2 is subject to N-acetylalanine.

It belongs to the SOSS-C family. In terms of assembly, component of the SOSS complex, composed of SOSS-B (SOSS-B1/NABP2 or SOSS-B2/NABP1), SOSS-A/INTS3 and SOSS-C/INIP. SOSS complexes containing SOSS-B1/NABP2 are more abundant than complexes containing SOSS-B2/NABP1. Interacts with INTS3; the interaction is direct.

The protein resides in the nucleus. Its function is as follows. Component of the SOSS complex, a multiprotein complex that functions downstream of the MRN complex to promote DNA repair and G2/M checkpoint. The SOSS complex associates with single-stranded DNA at DNA lesions and influences diverse endpoints in the cellular DNA damage response including cell-cycle checkpoint activation, recombinational repair and maintenance of genomic stability. Required for efficient homologous recombination-dependent repair of double-strand breaks (DSBs) and ATM-dependent signaling pathways. In Bos taurus (Bovine), this protein is SOSS complex subunit C (INIP).